Consider the following 113-residue polypeptide: Ig heavy chain V-III region ABE-47N (113 aa).

The Ig-like domain occupies 1-113 (EVKLEESGGG…YWGQGTLVTV (113 aa)). Cys-22 and Cys-98 are joined by a disulfide.

In Mus musculus (Mouse), this protein is Ig heavy chain V-III region ABE-47N.